A 20-amino-acid polypeptide reads, in one-letter code: IVGGTEVTPGEIPYQLSLQD.

Residues 1 to 20 (IVGGTEVTPGEIPYQLSLQD) enclose the Peptidase S1 domain. Residues 1–20 (IVGGTEVTPGEIPYQLSLQD) are disordered.

It belongs to the peptidase S1 family.

It carries out the reaction Hydrolysis of proteins, with broad specificity for peptide bonds. Native collagen is cleaved about 75% of the length of the molecule from the N-terminus. Low activity on small molecule substrates of both trypsin and chymotrypsin.. In terms of biological role, this enzyme is a serine protease capable of degrading the native triple helix of collagen. The sequence is that of Collagenolytic protease 36 kDa A from Paralithodes camtschaticus (Red king crab).